The following is a 138-amino-acid chain: Basic phospholipase A2 homolog 7 (138 aa).

The signal sequence occupies residues Met1 to Gly16. Disulfide bonds link Cys42/Cys131, Cys44/Cys60, Cys59/Cys111, Cys65/Cys138, Cys66/Cys104, and Cys91/Cys102. Positions Lys121–Lys133 are important for membrane-damaging activities in eukaryotes and bacteria; heparin-binding.

It belongs to the phospholipase A2 family. Group II subfamily. K49 sub-subfamily. As to expression, expressed by the venom gland.

Its subcellular location is the secreted. Functionally, snake venom phospholipase A2 homolog that lacks enzymatic activity. Is myotoxic and displays edema-inducing activities. A model of myotoxic mechanism has been proposed: an apo Lys49-PLA2 is activated by the entrance of a hydrophobic molecule (e.g. fatty acid) at the hydrophobic channel of the protein leading to a reorientation of a monomer. This reorientation causes a transition between 'inactive' to 'active' states, causing alignment of C-terminal and membrane-docking sites (MDoS) side-by-side and putting the membrane-disruption sites (MDiS) in the same plane, exposed to solvent and in a symmetric position for both monomers. The MDoS region stabilizes the toxin on membrane by the interaction of charged residues with phospholipid head groups. Subsequently, the MDiS region destabilizes the membrane with penetration of hydrophobic residues. This insertion causes a disorganization of the membrane, allowing an uncontrolled influx of ions (i.e. calcium and sodium), and eventually triggering irreversible intracellular alterations and cell death. The polypeptide is Basic phospholipase A2 homolog 7 (Craspedocephalus gramineus (Bamboo pit viper)).